The sequence spans 341 residues: Phosphoribosylformylglycinamidine cyclo-ligase (341 aa).

The protein belongs to the AIR synthase family.

Its subcellular location is the cytoplasm. It carries out the reaction 2-formamido-N(1)-(5-O-phospho-beta-D-ribosyl)acetamidine + ATP = 5-amino-1-(5-phospho-beta-D-ribosyl)imidazole + ADP + phosphate + H(+). The protein operates within purine metabolism; IMP biosynthesis via de novo pathway; 5-amino-1-(5-phospho-D-ribosyl)imidazole from N(2)-formyl-N(1)-(5-phospho-D-ribosyl)glycinamide: step 2/2. The sequence is that of Phosphoribosylformylglycinamidine cyclo-ligase from Picosynechococcus sp. (strain ATCC 27264 / PCC 7002 / PR-6) (Agmenellum quadruplicatum).